A 321-amino-acid polypeptide reads, in one-letter code: Sphingolipid delta(4)-desaturase DES1 (321 aa).

Transmembrane regions (helical) follow at residues 41–61 (PNFK…LFVV), 68–88 (WLIV…MLAV), 107–127 (ILGF…FKKY), 157–177 (FGKF…PLII), 187–206 (IINT…FLGW), and 208–230 (PLAY…GHFI).

The protein belongs to the fatty acid desaturase type 1 family. DEGS subfamily. Testes.

It is found in the endoplasmic reticulum membrane. Its subcellular location is the membrane. The protein resides in the mitochondrion. The enzyme catalyses an N-acylsphinganine + 2 Fe(II)-[cytochrome b5] + O2 + 2 H(+) = an N-acylsphing-4-enine + 2 Fe(III)-[cytochrome b5] + 2 H2O. It catalyses the reaction an N-acyleicosasphinganine + 2 Fe(II)-[cytochrome b5] + O2 + 2 H(+) = an N-acyleicosasphing-4-enine + 2 Fe(III)-[cytochrome b5] + 2 H2O. The protein operates within sphingolipid metabolism. Its function is as follows. Has sphingolipid-delta-4-desaturase activity. Converts sphinganine-containing sphingolipids (such as N-acylsphinganines or dihydroceramides) into sphingolipids containing the delta-4-desaturated sphingoid base (E)-sphing-4-enine (such as N-acylsphing-4-enines or ceramides), which are required for many different functions (structural functions as well as signaling). Required to initiate spermatid differentiation among other signals. Required for central spindle assembly and cytokinesis during male meiosis, may act as part of an anchoring mechanism that links membrane-bounded cellular compartments to components of the cytoskeleton. The polypeptide is Sphingolipid delta(4)-desaturase DES1 (Drosophila melanogaster (Fruit fly)).